Reading from the N-terminus, the 397-residue chain is Leucine carboxyl methyltransferase 1 (397 aa).

The interval Ala-17–Leu-61 is disordered. The segment covering Pro-26–Cys-43 has biased composition (low complexity). Over residues Arg-44–Pro-55 the composition is skewed to basic residues. Residues Arg-119, Gly-142, Asp-168, Asp-224 to Leu-225, and Glu-259 each bind S-adenosyl-L-methionine.

The protein belongs to the methyltransferase superfamily. LCMT family.

The enzyme catalyses [phosphatase 2A protein]-C-terminal L-leucine + S-adenosyl-L-methionine = [phosphatase 2A protein]-C-terminal L-leucine methyl ester + S-adenosyl-L-homocysteine. Functionally, methylates the carboxyl group of the C-terminal leucine residue of protein phosphatase 2A catalytic subunits to form alpha-leucine ester residues. The sequence is that of Leucine carboxyl methyltransferase 1 (PPM1) from Cryptococcus neoformans var. neoformans serotype D (strain B-3501A) (Filobasidiella neoformans).